The following is a 490-amino-acid chain: Pre-glycoprotein polyprotein GP complex (490 aa).

Gly2 is lipidated: N-myristoyl glycine; by host. Residues 2–17 (GQIVTFFQEVPHVIEE) lie on the Extracellular side of the membrane. Residues 18–33 (VMNIVLIALSILAILK) traverse the membrane as a helical segment. Residues 34–58 (GLYNVATCGLIGLVTFLLLSGRSCS) lie on the Cytoplasmic side of the membrane. Cys57 provides a ligand contact to Zn(2+). Over 59–431 (LIYKGTYELQ…QGKTPLGLVD (373 aa)) the chain is Extracellular. 6 N-linked (GlcNAc...) asparagine; by host glycosylation sites follow: Asn78, Asn88, Asn98, Asn108, Asn118, and Asn166. Disulfide bonds link Cys85–Cys230, Cys117–Cys154, Cys179–Cys211, Cys278–Cys291, Cys300–Cys309, and Cys363–Cys384. N-linked (GlcNAc...) asparagine; by host glycosylation is present at Asn223. N-linked (GlcNAc...) asparagine; by host glycans are attached at residues Asn364, Asn372, Asn389, and Asn394. Residues 432–452 (LFVFSTSFYLISIFLHLVKIP) traverse the membrane as a helical segment. The Cytoplasmic segment spans residues 453–490 (THRHIVGKPCPKPHRLNHMGICSCGLYKQPGVPVRWKR). Zn(2+)-binding residues include His454, His456, Cys462, His466, Cys474, and Cys476.

The protein belongs to the arenaviridae GPC protein family. As to quaternary structure, interacts with glycoprotein G2. Part of the GP complex (GP-C) together with glycoprotein G1 and glycoprotein G2. The GP-complex interacts with protein Z, which interacts with ribonucleocapsid; these interactions may induce virion budding. In terms of assembly, homotrimer; disulfide-linked. In pre-fusion state, G1 homotrimers bind G2 homotrimers via ionic interactions. Part of the GP complex (GP-C) together with glycoprotein G2 and the stable signal peptide. Interacts with the primary host receptor DAG1 on the cell surface; this interaction occurs at pH 8.0 but not at pH 6.0 and below. Upon virus internalization and at endosomal pH, interacts with the host lysosomal protein LAMP1; this interaction mediates G1 dissociation from GP-C and membrane fusion. The GP-complex interacts with protein Z, which interacts with ribonucleocapsid; these interactions may induce virion budding. Homotrimer. Interacts with the stable signal peptide. In pre-fusion state, G2 homotrimers bind G1 homotrimers via ionic interactions. Part of the GP complex (GP-C) together with glycoprotein G1 and the stable signal peptide. Acidification in the endosome triggers rearrangements, which ultimately leads to a 6 helix bundle formed by the two heptad repeat domains (HR1 and HR2) in post-fusion state. The GP-complex interacts with protein Z, which interacts with ribonucleocapsid; these interactions may induce virion budding. Post-translationally, specific enzymatic cleavages in vivo yield mature proteins. GP-C polyprotein is cleaved in the endoplasmic reticulum by the host protease MBTPS1. Only cleaved glycoprotein is incorporated into virions. The SSP remains stably associated with the GP complex following cleavage by signal peptidase and plays crucial roles in the trafficking of GP through the secretory pathway. In terms of processing, myristoylation is necessary for GP2-mediated fusion activity.

It is found in the virion membrane. It localises to the host endoplasmic reticulum membrane. Its subcellular location is the host Golgi apparatus membrane. The protein resides in the host cell membrane. Functionally, functions as a cleaved signal peptide that is retained as the third component of the GP complex (GP-C). Helps to stabilize the spike complex in its native conformation. The SSP is required for efficient glycoprotein expression, post-translational maturation cleavage of G1 and G2, glycoprotein transport to the cell surface plasma membrane, formation of infectious virus particles, and acid pH-dependent glycoprotein-mediated cell fusion. Forms the virion spikes together with glycoprotein G2. The glycoprotein spike trimers are connected to the underlying matrix. Interacts with the host receptor. Mediates virus attachment to the host primary receptor alpha-dystroglycan DAG1 (alpha-DG) at the cell surface. This attachment induces virion internalization apparently through macropinocytosis. Following endocytosis, there is a pH-dependent switch from binding DAG1 to the host lysosomal receptor LAMP1. This latter binding triggers the dissociation of GP1, exposing the fusion subunit, GP2, such that fusion can occur. Down-modulates host DAG1. In terms of biological role, forms the virion spikes together with glycoprotein G1. The glycoprotein spike trimers are connected to the underlying matrix. Class I viral fusion protein that directs fusion of viral and host endosomal membranes, leading to delivery of the nucleocapsid into the cytoplasm. Membrane fusion is mediated by irreversible conformational changes induced by acidification. The sequence is that of Pre-glycoprotein polyprotein GP complex from Lassa virus (strain GA391) (LASV).